The chain runs to 341 residues: tRNA N6-adenosine threonylcarbamoyltransferase (341 aa).

Positions 120 and 124 each coordinate Fe cation. Residues Val142–Gly146, Asp175, Gly188, Asp192, and Asn281 each bind substrate. Asp310 serves as a coordination point for Fe cation.

Belongs to the KAE1 / TsaD family. Fe(2+) serves as cofactor.

The protein localises to the cytoplasm. The enzyme catalyses L-threonylcarbamoyladenylate + adenosine(37) in tRNA = N(6)-L-threonylcarbamoyladenosine(37) in tRNA + AMP + H(+). Required for the formation of a threonylcarbamoyl group on adenosine at position 37 (t(6)A37) in tRNAs that read codons beginning with adenine. Is involved in the transfer of the threonylcarbamoyl moiety of threonylcarbamoyl-AMP (TC-AMP) to the N6 group of A37, together with TsaE and TsaB. TsaD likely plays a direct catalytic role in this reaction. This is tRNA N6-adenosine threonylcarbamoyltransferase from Anoxybacillus flavithermus (strain DSM 21510 / WK1).